The sequence spans 96 residues: Co-chaperonin GroES (96 aa).

Belongs to the GroES chaperonin family. Heptamer of 7 subunits arranged in a ring. Interacts with the chaperonin GroEL.

Its subcellular location is the cytoplasm. Functionally, together with the chaperonin GroEL, plays an essential role in assisting protein folding. The GroEL-GroES system forms a nano-cage that allows encapsulation of the non-native substrate proteins and provides a physical environment optimized to promote and accelerate protein folding. GroES binds to the apical surface of the GroEL ring, thereby capping the opening of the GroEL channel. The chain is Co-chaperonin GroES from Myxococcus xanthus (strain DK1622).